The chain runs to 157 residues: Peptide methionine sulfoxide reductase MsrB (157 aa).

Residues Asp-14–Leu-137 enclose the MsrB domain. The active-site Nucleophile is the Cys-126.

Belongs to the MsrB Met sulfoxide reductase family.

It catalyses the reaction L-methionyl-[protein] + [thioredoxin]-disulfide + H2O = L-methionyl-(R)-S-oxide-[protein] + [thioredoxin]-dithiol. The sequence is that of Peptide methionine sulfoxide reductase MsrB from Deinococcus radiodurans (strain ATCC 13939 / DSM 20539 / JCM 16871 / CCUG 27074 / LMG 4051 / NBRC 15346 / NCIMB 9279 / VKM B-1422 / R1).